A 284-amino-acid polypeptide reads, in one-letter code: Pseudouridine-5'-phosphate glycosidase (284 aa).

E8 serves as the catalytic Proton donor. Residues K69 and V89 each contribute to the substrate site. Mn(2+) is bound at residue D119. 121-123 (SQD) lines the substrate pocket. The Nucleophile role is filled by K140.

Belongs to the pseudouridine-5'-phosphate glycosidase family. As to quaternary structure, homotrimer. Mn(2+) serves as cofactor.

The enzyme catalyses D-ribose 5-phosphate + uracil = psi-UMP + H2O. Catalyzes the reversible cleavage of pseudouridine 5'-phosphate (PsiMP) to ribose 5-phosphate and uracil. Functions biologically in the cleavage direction, as part of a pseudouridine degradation pathway. The sequence is that of Pseudouridine-5'-phosphate glycosidase from Pseudothermotoga lettingae (strain ATCC BAA-301 / DSM 14385 / NBRC 107922 / TMO) (Thermotoga lettingae).